The primary structure comprises 752 residues: Complement C2 (752 aa).

The signal sequence occupies residues 1-20 (MGPLMVLFCLLFLYPGLADS). Sushi domains follow at residues 22–86 (PSCP…VCKP), 87–146 (VRCP…VCDN), and 149–206 (GHCP…ICRQ). 6 disulfide bridges follow: cysteine 24–cysteine 64, cysteine 51–cysteine 84, cysteine 89–cysteine 131, cysteine 117–cysteine 144, cysteine 151–cysteine 191, and cysteine 177–cysteine 204. N-linked (GlcNAc...) asparagine glycosylation occurs at asparagine 29. Asparagine 112 carries an N-linked (GlcNAc...) asparagine glycan. The 199-residue stretch at 254-452 (NLYLLLDCSQ…KALHQVFEHM (199 aa)) folds into the VWFA domain. The short motif at 260–264 (DCSQS) is the MIDAS-like motif element. Residues serine 262 and serine 264 each coordinate Mg(2+). Mn(2+) contacts are provided by serine 262 and serine 264. N-linked (GlcNAc...) asparagine glycans are attached at residues asparagine 290 and asparagine 333. Mg(2+) is bound at residue threonine 337. Threonine 337 is a Mn(2+) binding site. Disulfide bonds link cysteine 463-cysteine 581, cysteine 492-cysteine 508, and cysteine 584-cysteine 600. One can recognise a Peptidase S1 domain in the interval 464–744 (GVGNMSANAS…MQPWLRQHLG (281 aa)). N-linked (GlcNAc...) asparagine glycans are attached at residues asparagine 467 and asparagine 471. Catalysis depends on charge relay system residues histidine 507 and aspartate 561. A glycan (N-linked (GlcNAc...) asparagine) is linked at asparagine 621. 2 disulfide bridges follow: cysteine 638-cysteine 665 and cysteine 675-cysteine 705. N-linked (GlcNAc...) (complex) asparagine glycosylation is present at asparagine 651. Serine 679 acts as the Charge relay system in catalysis.

Belongs to the peptidase S1 family. In terms of assembly, serine protease component of the C3 convertase, also named C4bC2b, composed of the serine protease complement C2b and complement C4b. Serine protease component of the C5 convertase, also named C4bC2bC3b, composed of the serine protease complement C2b, complement C3b, as well as complement C4b. As to quaternary structure, (Microbial infection) Interacts with Schistosoma haematobium TOR (via N-terminal extracellular domain). This results in inhibition of the classical and lectin pathway of complement activation, probably due to interference with binding of C2a to C4b such that C3 convertase cannot be formed. This infers resistance to complement-mediated cell lysis, allowing parasite survival and infection. The cofactor is Mg(2+). It depends on Mn(2+) as a cofactor. Cleaved and activated by different proteases depending on the complement pathway to generate complement C2a and serine protease complement C2b chains. Cleaved and activated by C1S following activation by the classical complement system. Cleaved and activated by MASP2 following activation by the lectin complement system. Cleaved and activated by GZMK following activation by the GZMK complement system.

The protein localises to the secreted. It localises to the cell surface. It catalyses the reaction Selective cleavage of Arg-|-Ser bond in complement component C3 alpha-chain to form C3a and C3b, and Arg-|-Xaa bond in complement component C5 alpha-chain to form C5a and C5b.. Its function is as follows. Precursor of the catalytic component of the C3 and C5 convertase complexes, which are part of the complement pathway, a cascade of proteins that leads to phagocytosis and breakdown of pathogens and signaling that strengthens the adaptive immune system. Component C2 is part of the classical, lectin and GZMK complement systems. Catalytic component of the complement C3 and C5 convertase complexes. Following complement activation, recruited to the surface of pathogens by complement C4b opsonin to form the C3 convertase, or C3b and C4b opsonins to form the C5 convertase. As part of the C3 convertase, cleaves and activate C3 into C3a anaphylatoxin and C3b opsonin, the next components of the complement pathways. As part of the C5 convertase, cleaves and activate C5 into C5a anaphylatoxin and C5b component of the membrane attack complex. In Homo sapiens (Human), this protein is Complement C2.